Consider the following 351-residue polypeptide: D-glucoside 3-dehydrogenase (351 aa).

The protein belongs to the Gfo/Idh/MocA family.

The catalysed reaction is a D-glucoside + NAD(+) = a 3-dehydro-D-glucoside + NADH + H(+). Its function is as follows. Catalyzes the NADH-dependent reduction of the oxo group at C3 of 3-dehydro-D-glucosides leading to D-glucosides. Probably functions in a metabolic pathway that transforms D-gulosides to D-glucosides. Can use 3-dehydro-D-glucose, methyl alpha-3-dehydro-D-glucoside and methyl beta-3-dehydro-D-glucoside as substrates in vitro. However, the actual specific physiological substrates for this metabolic pathway are unknown. To a lesser extent, is also able to catalyze the reverse reactions, i.e. the NAD(+)-dependent oxidation of the hydroxyl group at C3 of D-glucosides leading to 3-dehydro-D-glucosides. Cannot act on UDP-glucose, UDP-N-acetyl-D-glucosamine, D-glucosamine, N-acetyl-D-glucosamine, or UDP-D-galactose. The protein is D-glucoside 3-dehydrogenase (ycjS) of Escherichia coli (strain K12).